A 313-amino-acid chain; its full sequence is Probable GTP 3',8-cyclase (313 aa).

The Radical SAM core domain occupies 4–224 (VYGRELEDLR…EIRNKHKRPR (221 aa)). Arg13 contacts GTP. [4Fe-4S] cluster-binding residues include Cys20, Cys24, and Cys27. Lys60 lines the GTP pocket. Residue Gly64 coordinates S-adenosyl-L-methionine. Thr90 contributes to the GTP binding site. S-adenosyl-L-methionine is bound at residue Ser114. Lys151 is a binding site for GTP. The [4Fe-4S] cluster site is built by Cys244 and Cys247. A GTP-binding site is contributed by 249-251 (RIR). Cys261 lines the [4Fe-4S] cluster pocket.

Belongs to the radical SAM superfamily. MoaA family. It depends on [4Fe-4S] cluster as a cofactor.

It carries out the reaction GTP + AH2 + S-adenosyl-L-methionine = (8S)-3',8-cyclo-7,8-dihydroguanosine 5'-triphosphate + 5'-deoxyadenosine + L-methionine + A + H(+). The protein operates within cofactor biosynthesis; molybdopterin biosynthesis. Catalyzes the cyclization of GTP to (8S)-3',8-cyclo-7,8-dihydroguanosine 5'-triphosphate. The sequence is that of Probable GTP 3',8-cyclase from Sulfolobus acidocaldarius (strain ATCC 33909 / DSM 639 / JCM 8929 / NBRC 15157 / NCIMB 11770).